Consider the following 438-residue polypeptide: Ornithine aminotransferase car2 (438 aa).

Position 275 is an N6-(pyridoxal phosphate)lysine (K275).

It belongs to the class-III pyridoxal-phosphate-dependent aminotransferase family. It depends on pyridoxal 5'-phosphate as a cofactor.

It localises to the cytoplasm. Its subcellular location is the nucleus. It carries out the reaction a 2-oxocarboxylate + L-ornithine = L-glutamate 5-semialdehyde + an L-alpha-amino acid. It participates in amino-acid biosynthesis; L-proline biosynthesis; L-glutamate 5-semialdehyde from L-ornithine: step 1/1. The protein is Ornithine aminotransferase car2 (car2) of Schizosaccharomyces pombe (strain 972 / ATCC 24843) (Fission yeast).